The primary structure comprises 255 residues: Large ribosomal subunit protein uL4 (255 aa).

Belongs to the universal ribosomal protein uL4 family. As to quaternary structure, part of the 50S ribosomal subunit.

One of the primary rRNA binding proteins, this protein initially binds near the 5'-end of the 23S rRNA. It is important during the early stages of 50S assembly. It makes multiple contacts with different domains of the 23S rRNA in the assembled 50S subunit and ribosome. Functionally, forms part of the polypeptide exit tunnel. The sequence is that of Large ribosomal subunit protein uL4 from Pyrococcus furiosus (strain ATCC 43587 / DSM 3638 / JCM 8422 / Vc1).